Reading from the N-terminus, the 484-residue chain is MEAACLVRRLGLPQGEEALKARLRRPGHPRLREALAAYLKRLQAPEEVFRALERLEVGAVVTGQQAGLLGGPALTFYKAHTALCLADRAGAAGVFWVASQDHDVEEVRHLHLLRDEVPETLSLDLPPLPSGRIPLAPHRERLRAFLGPWAKDYRLGYALEAETLSEFFARVLLAFLGERGLVPFDPMAEELAPLFLEALERELSDPLGSAEAINREAERIRALGGKPPLRRKPGATNLFLETDQRRLLFYEGGAFTDGVRRYTAKELWEIARADPSRLTPAAGLRPVFQDLVLPTAGFVVGPNELRYVAELSGVYARYGLAMPALFLRAFGVVVEPPVRRILEKYRLDPWAFVDEGEAAFLRAAEAWLAPFRAFRDRVEGLLQEASRLVEEAEALEPNLVRPLRRFRARVRGEAERLRRKLLAAQAARDEVLARHLRRLKVHLLPFGLPQERVYPYAMYALRHGEALRRLAEAPWEGRVALYLG.

The stretch at 372–435 (RAFRDRVEGL…AARDEVLARH (64 aa)) forms a coiled coil.

This sequence belongs to the BshC family.

This is Putative cysteine ligase BshC from Thermus thermophilus (strain ATCC BAA-163 / DSM 7039 / HB27).